Consider the following 306-residue polypeptide: Ribonuclease Z (306 aa).

Residues H63, H65, D67, H68, H141, D211, and H269 each coordinate Zn(2+). D67 acts as the Proton acceptor in catalysis.

Belongs to the RNase Z family. Homodimer. Requires Zn(2+) as cofactor.

The catalysed reaction is Endonucleolytic cleavage of RNA, removing extra 3' nucleotides from tRNA precursor, generating 3' termini of tRNAs. A 3'-hydroxy group is left at the tRNA terminus and a 5'-phosphoryl group is left at the trailer molecule.. Zinc phosphodiesterase, which displays some tRNA 3'-processing endonuclease activity. Probably involved in tRNA maturation, by removing a 3'-trailer from precursor tRNA. In Staphylococcus epidermidis (strain ATCC 12228 / FDA PCI 1200), this protein is Ribonuclease Z.